Consider the following 244-residue polypeptide: Sortase B (244 aa).

Residues 1–6 (MRMKRF) are Cytoplasmic-facing. A helical transmembrane segment spans residues 7–24 (LTIVQILLVVIIIIFGYK). Residues 25-244 (IVQTYIEDKQ…VVVAKIIKVS (220 aa)) lie on the Extracellular side of the membrane. Cysteine 223 serves as the catalytic Acyl-thioester intermediate.

This sequence belongs to the bacterial sortase family. Class B subfamily.

It localises to the cell membrane. The catalysed reaction is The enzyme catalyzes a cell wall sorting reaction in which a surface protein with a sorting signal containing a NPXTN motif is cleaved between the Thr and Asn residue. The resulting threonine carboxyl end of the protein is covalently attached to a pentaglycine cross-bridge of peptidoglycan.. With respect to regulation, inhibited by MTSET (2-(Trimethylammonium)-ethyl-methanethiosulfonate) and E64 ([n- (l-3-trans-carboxyoxirane-2-carbonyl)-l-leucyl]-amido(4-guanido)butane). Inhibited by coptisine. Its function is as follows. Transpeptidase that anchors surface proteins to the cell wall. Recognizes and modifies its substrate by proteolytic cleavage of a C-terminal sorting signal. Following cleavage, a covalent intermediate is formed via a thioester bond between the sortase and its substrate, which is then transferred and covalently attached to the cell wall. This sortase recognizes an Asn-Pro-Gln-Thr-Asn (NPQTN) motif in IsdC, which is cleaved by the sortase between the threonine and aspargine residues; may only have 1 substrate in this bacterium. May be dedicated to the process of iron acquisition during bacterial infection. The chain is Sortase B from Staphylococcus aureus (strain NCTC 8325 / PS 47).